We begin with the raw amino-acid sequence, 180 residues long: Pro-glucagon (180 aa).

Positions M1–Q20 are cleaved as a signal peptide. Residues L23 to G56 form a disordered region. S54 carries the phosphoserine modification. Positions N84–A89 are excised as a propeptide. 2 positions are modified to phosphoserine: S105 and S108. The residue at position 127 (R127) is an Arginine amide. The propeptide occupies D131 to R145. Phosphoserine is present on residues S150 and S152.

It belongs to the glucagon family. In terms of processing, proglucagon is post-translationally processed in a tissue-specific manner in pancreatic A cells and intestinal L cells. In pancreatic A cells, the major bioactive hormone is glucagon cleaved by PCSK2/PC2. In the intestinal L cells PCSK1/PC1 liberates GLP-1, GLP-2, glicentin and oxyntomodulin. GLP-1 is further N-terminally truncated by post-translational processing in the intestinal L cells resulting in GLP-1(7-37) GLP-1-(7-36)amide. The C-terminal amidation is neither important for the metabolism of GLP-1 nor for its effects on the endocrine pancreas. In terms of tissue distribution, glucagon is secreted in the A cells of the islets of Langerhans. GLP-1, GLP-2, oxyntomodulin and glicentin are secreted from enteroendocrine cells throughout the gastrointestinal tract. GLP-1 and GLP-2 are also secreted in selected neurons in the brain.

It localises to the secreted. In terms of biological role, plays a key role in glucose metabolism and homeostasis. Regulates blood glucose by increasing gluconeogenesis and decreasing glycolysis. A counterregulatory hormone of insulin, raises plasma glucose levels in response to insulin-induced hypoglycemia. Plays an important role in initiating and maintaining hyperglycemic conditions in diabetes. Its function is as follows. Potent stimulator of glucose-dependent insulin release. Also stimulates insulin release in response to IL6. Plays important roles on gastric motility and the suppression of plasma glucagon levels. May be involved in the suppression of satiety and stimulation of glucose disposal in peripheral tissues, independent of the actions of insulin. Has growth-promoting activities on intestinal epithelium. May also regulate the hypothalamic pituitary axis (HPA) via effects on LH, TSH, CRH, oxytocin, and vasopressin secretion. Increases islet mass through stimulation of islet neogenesis and pancreatic beta cell proliferation. Inhibits beta cell apoptosis. Functionally, stimulates intestinal growth and up-regulates villus height in the small intestine, concomitant with increased crypt cell proliferation and decreased enterocyte apoptosis. The gastrointestinal tract, from the stomach to the colon is the principal target for GLP-2 action. Plays a key role in nutrient homeostasis, enhancing nutrient assimilation through enhanced gastrointestinal function, as well as increasing nutrient disposal. Stimulates intestinal glucose transport and decreases mucosal permeability. Significantly reduces food intake. Inhibits gastric emptying in humans. Suppression of gastric emptying may lead to increased gastric distension, which may contribute to satiety by causing a sensation of fullness. In terms of biological role, may modulate gastric acid secretion and the gastro-pyloro-duodenal activity. May play an important role in intestinal mucosal growth in the early period of life. This Octodon degus (Degu) protein is Pro-glucagon (GCG).